The following is a 406-amino-acid chain: Multidrug resistance protein MdtG (406 aa).

Helical transmembrane passes span 16–36 (VAWL…PFLP), 56–76 (LVFS…GGLA), 90–110 (LGMA…QFLL), 113–133 (ALLG…ATQV), 144–164 (TLST…GLLA), 171–191 (PVFF…LFFT), 222–242 (LFVT…ILTL), 254–274 (IAFI…LSAP), 288–308 (ILIT…FVQT), 317–337 (FLLG…LVYN), and 376–396 (AVFC…WNSL).

Belongs to the major facilitator superfamily. DHA1 family. MdtG (TC 2.A.1.2.20) subfamily.

It localises to the cell inner membrane. This is Multidrug resistance protein MdtG from Citrobacter koseri (strain ATCC BAA-895 / CDC 4225-83 / SGSC4696).